The chain runs to 871 residues: Speckle targeted PIP5K1A-regulated poly(A) polymerase (871 aa).

Residues 16–46 (FRCCLCHITTANQPSLDAHLGGRKHRHLVEL) form a Matrin-type zinc finger. The region spanning 56–128 (RSVFVSGFPR…RRLRVRPREQ (73 aa)) is the RRM domain. S205 lines the ATP pocket. Mg(2+)-binding residues include D216 and D218. Residues D216 and D218 each coordinate UTP. Positions 252 to 321 (QALACTPASP…QEDQGDGDQG (70 aa)) are disordered. Positions 259-269 (ASPPDSQPPAS) are enriched in pro residues. Position 392 (N392) interacts with ATP. Positions 392, 414, 432, and 547 each coordinate UTP. The PAP-associated domain occupies 489–547 (LSSLLAQFFSCVSCWDLRGSLLSLREGQALSVAGGLPSNLSEGLRLGPMNLQDPFDLSH). Residues 596-871 (SSPSSILSAT…LPQALRNLLK (276 aa)) are KA1; binds the bulging loops of U6 snRNA but is dispensable for terminal uridylyltransferase activity. The tract at residues 636–684 (GTKRLRSEGGGPGEPPQGGTSKRAKLDGQKKSCEEGPEEQQGCAGEHGE) is disordered. The span at 659–669 (AKLDGQKKSCE) shows a compositional bias: basic and acidic residues. S748 is modified (phosphoserine).

This sequence belongs to the DNA polymerase type-B-like family. In terms of assembly, associates with the cleavage and polyadenylation specificity factor (CPSF) complex. Interacts with CPSF1 and CPSF3; the interaction is direct. Interacts with PIP5K1A. Requires Mg(2+) as cofactor. Mn(2+) serves as cofactor. Phosphorylated by CK1 in the proline-rich (Pro-rich) region.

The protein localises to the nucleus. It is found in the nucleolus. Its subcellular location is the nucleus speckle. It carries out the reaction RNA(n) + UTP = RNA(n)-3'-uridine ribonucleotide + diphosphate. It catalyses the reaction RNA(n) + ATP = RNA(n)-3'-adenine ribonucleotide + diphosphate. Its activity is regulated as follows. Adenylyltransferase activity is specifically phosphatidylinositol 4,5-bisphosphate (PtdIns(4,5)P2). Functionally, poly(A) polymerase that creates the 3'-poly(A) tail of specific pre-mRNAs. Localizes to nuclear speckles together with PIP5K1A and mediates polyadenylation of a select set of mRNAs, such as HMOX1. In addition to polyadenylation, it is also required for the 3'-end cleavage of pre-mRNAs: binds to the 3'UTR of targeted pre-mRNAs and promotes the recruitment and assembly of the CPSF complex on the 3'UTR of pre-mRNAs. In addition to adenylyltransferase activity, also has uridylyltransferase activity. However, the ATP ratio is higher than UTP in cells, suggesting that it functions primarily as a poly(A) polymerase. Acts as a specific terminal uridylyltransferase for U6 snRNA in vitro: responsible for a controlled elongation reaction that results in the restoration of the four 3'-terminal UMP-residues found in newly transcribed U6 snRNA. Not involved in replication-dependent histone mRNA degradation. The chain is Speckle targeted PIP5K1A-regulated poly(A) polymerase (TUT1) from Bos taurus (Bovine).